A 225-amino-acid chain; its full sequence is Probable iron export ATP-binding protein FetA (225 aa).

Positions 8–225 (LQLQNVGYLA…EMQEARYELA (218 aa)) constitute an ABC transporter domain. Position 40 to 47 (40 to 47 (GPSGCGKS)) interacts with ATP.

It belongs to the ABC transporter superfamily. The complex is composed of two ATP-binding proteins (FetA) and two transmembrane proteins (FetB).

Its subcellular location is the cell inner membrane. In terms of biological role, part of the ABC transporter complex FetAB, which is probably involved in iron export and enhances resistance to H(2)O(2)-mediated oxidative stress. Probably responsible for energy coupling to the transport system. This chain is Probable iron export ATP-binding protein FetA (fetA), found in Escherichia coli (strain K12).